Here is a 102-residue protein sequence, read N- to C-terminus: Small ribosomal subunit protein uS10 (102 aa).

This sequence belongs to the universal ribosomal protein uS10 family. Part of the 30S ribosomal subunit.

In terms of biological role, involved in the binding of tRNA to the ribosomes. The polypeptide is Small ribosomal subunit protein uS10 (Halalkalibacterium halodurans (strain ATCC BAA-125 / DSM 18197 / FERM 7344 / JCM 9153 / C-125) (Bacillus halodurans)).